The primary structure comprises 696 residues: Methionine--tRNA ligase (696 aa).

A 'HIGH' region motif is present at residues 12-22; the sequence is PYANGPLHLGH. Zn(2+)-binding residues include Cys-143, Cys-146, Cys-156, and Cys-159. A 'KMSKS' region motif is present at residues 330–334; it reads KMSKS. Lys-333 is an ATP binding site. One can recognise a tRNA-binding domain in the interval 593-696; sequence DFAKLDLRIG…AGAQPGMPVR (104 aa).

It belongs to the class-I aminoacyl-tRNA synthetase family. MetG type 1 subfamily. As to quaternary structure, homodimer. It depends on Zn(2+) as a cofactor.

It is found in the cytoplasm. It carries out the reaction tRNA(Met) + L-methionine + ATP = L-methionyl-tRNA(Met) + AMP + diphosphate. In terms of biological role, is required not only for elongation of protein synthesis but also for the initiation of all mRNA translation through initiator tRNA(fMet) aminoacylation. The polypeptide is Methionine--tRNA ligase (Xanthomonas campestris pv. campestris (strain 8004)).